The chain runs to 258 residues: Triosephosphate isomerase (258 aa).

9–11 is a binding site for substrate; the sequence is NWK. The active-site Electrophile is His-95. Glu-167 acts as the Proton acceptor in catalysis. Residues Gly-173 and Ser-212 each contribute to the substrate site.

The protein belongs to the triosephosphate isomerase family. Homodimer.

It is found in the cytoplasm. It catalyses the reaction D-glyceraldehyde 3-phosphate = dihydroxyacetone phosphate. Its pathway is carbohydrate biosynthesis; gluconeogenesis. The protein operates within carbohydrate degradation; glycolysis; D-glyceraldehyde 3-phosphate from glycerone phosphate: step 1/1. Its function is as follows. Involved in the gluconeogenesis. Catalyzes stereospecifically the conversion of dihydroxyacetone phosphate (DHAP) to D-glyceraldehyde-3-phosphate (G3P). This chain is Triosephosphate isomerase, found in Blochmanniella pennsylvanica (strain BPEN).